A 566-amino-acid polypeptide reads, in one-letter code: Mucin-21 (566 aa).

The N-terminal stretch at 1–24 (MKMQKGNVLLMFGLLLHLEAATNS) is a signal peptide. An N-linked (GlcNAc...) asparagine glycan is attached at Asn-25. Residues 25-68 (NETSTSANTGSSVISSGASTATNSGSSVTSSGVSTATISGSSVT) form a disordered region. Topologically, residues 25-479 (NETSTSANTG…KPGGSLVPWE (455 aa)) are extracellular. 28 repeat units span residues 31 to 44 (ANTG…GAST), 45 to 59 (ATNS…GVST), 60 to 74 (ATIS…GVSI), 75 to 89 (VTNS…GIST), 90 to 104 (ATNS…GISI), 105 to 119 (ATNS…GAST), 120 to 134 (ATNS…GAST), 135 to 149 (ATNS…GAST), 150 to 164 (ATNS…EAST), 165 to 179 (ATNS…GAST), 180 to 194 (ATNS…RAST), 195 to 209 (ATNS…GAST), 210 to 224 (ATNS…GAGT), 225 to 239 (ATNS…GAST), 244 to 254 (ESSTPSSGAGT), 255 to 269 (ATNS…GAGT), 270 to 284 (ATNS…GIST), 285 to 299 (VTNS…GANT), 300 to 314 (ATNS…GANT), 315 to 329 (ATNS…GAST), 330 to 344 (ATNS…GAST), 345 to 359 (ATNS…GAST), 360 to 374 (ATNS…GTST), 375 to 389 (ATNS…GAST), 390 to 404 (ATTS…GAST), 405 to 419 (ATNS…GAST), 420 to 434 (ATNS…GANT), and 435 to 449 (ATNS…GSGT). The segment at 31–435 (ANTGSSVISS…STTSSGANTA (405 aa)) is 28 X 15 AA approximate tandem repeats. Positions 106–456 (TNSESSTTSS…SGTAALTGMH (351 aa)) are disordered. The helical transmembrane segment at 480–500 (IFLITLVSVVAAVGLFAGLFF) threads the bilayer. Over 501-566 (CVRNSLSLRN…MEMSGRNSGP (66 aa)) the chain is Cytoplasmic. The segment at 521–566 (GLNHGLGPGPGGNHGAPHRPRWSPNWFWRRPVSSIAMEMSGRNSGP) is cytoplasmic tail.

In terms of processing, O-glycosylated. In terms of tissue distribution, expressed in lung, large intestine, thymus, and testis. Expressed in normal and malignant bronchial epithelial cells.

It is found in the cell membrane. The sequence is that of Mucin-21 (MUC21) from Homo sapiens (Human).